A 317-amino-acid polypeptide reads, in one-letter code: 4-hydroxy-3-methylbut-2-enyl diphosphate reductase (317 aa).

C12 contacts [4Fe-4S] cluster. Residues H41 and H74 each contribute to the (2E)-4-hydroxy-3-methylbut-2-enyl diphosphate site. Dimethylallyl diphosphate contacts are provided by H41 and H74. Isopentenyl diphosphate contacts are provided by H41 and H74. C97 serves as a coordination point for [4Fe-4S] cluster. H125 serves as a coordination point for (2E)-4-hydroxy-3-methylbut-2-enyl diphosphate. Residue H125 participates in dimethylallyl diphosphate binding. H125 contacts isopentenyl diphosphate. E127 serves as the catalytic Proton donor. A (2E)-4-hydroxy-3-methylbut-2-enyl diphosphate-binding site is contributed by T168. A [4Fe-4S] cluster-binding site is contributed by C198. Positions 226, 227, 228, and 270 each coordinate (2E)-4-hydroxy-3-methylbut-2-enyl diphosphate. Residues S226, S227, N228, and S270 each contribute to the dimethylallyl diphosphate site. Residues S226, S227, N228, and S270 each contribute to the isopentenyl diphosphate site.

The protein belongs to the IspH family. In terms of assembly, homodimer. Requires [4Fe-4S] cluster as cofactor.

The catalysed reaction is isopentenyl diphosphate + 2 oxidized [2Fe-2S]-[ferredoxin] + H2O = (2E)-4-hydroxy-3-methylbut-2-enyl diphosphate + 2 reduced [2Fe-2S]-[ferredoxin] + 2 H(+). It carries out the reaction dimethylallyl diphosphate + 2 oxidized [2Fe-2S]-[ferredoxin] + H2O = (2E)-4-hydroxy-3-methylbut-2-enyl diphosphate + 2 reduced [2Fe-2S]-[ferredoxin] + 2 H(+). Its pathway is isoprenoid biosynthesis; dimethylallyl diphosphate biosynthesis; dimethylallyl diphosphate from (2E)-4-hydroxy-3-methylbutenyl diphosphate: step 1/1. It participates in isoprenoid biosynthesis; isopentenyl diphosphate biosynthesis via DXP pathway; isopentenyl diphosphate from 1-deoxy-D-xylulose 5-phosphate: step 6/6. In terms of biological role, catalyzes the conversion of 1-hydroxy-2-methyl-2-(E)-butenyl 4-diphosphate (HMBPP) into a mixture of isopentenyl diphosphate (IPP) and dimethylallyl diphosphate (DMAPP). Acts in the terminal step of the DOXP/MEP pathway for isoprenoid precursor biosynthesis. The polypeptide is 4-hydroxy-3-methylbut-2-enyl diphosphate reductase (Yersinia enterocolitica serotype O:8 / biotype 1B (strain NCTC 13174 / 8081)).